Consider the following 833-residue polypeptide: Leucine--tRNA ligase (833 aa).

A 'HIGH' region motif is present at residues 41 to 52 (PYPSGAGLHVGH). Positions 610 to 614 (KMSKS) match the 'KMSKS' region motif. K613 is an ATP binding site.

It belongs to the class-I aminoacyl-tRNA synthetase family.

The protein resides in the cytoplasm. The enzyme catalyses tRNA(Leu) + L-leucine + ATP = L-leucyl-tRNA(Leu) + AMP + diphosphate. This chain is Leucine--tRNA ligase, found in Streptococcus pyogenes serotype M1.